A 540-amino-acid polypeptide reads, in one-letter code: DM7 family protein GM11956 (540 aa).

The interval 416 to 443 (ATDTRGRDEIRTSCDQPQEKDEGSAEAD) is disordered. Residues 417–443 (TDTRGRDEIRTSCDQPQEKDEGSAEAD) are compositionally biased toward basic and acidic residues.

The protein belongs to the DM7 family.

This chain is DM7 family protein GM11956, found in Drosophila sechellia (Fruit fly).